The following is a 94-amino-acid chain: Cell division topological specificity factor (94 aa).

It belongs to the MinE family.

In terms of biological role, prevents the cell division inhibition by proteins MinC and MinD at internal division sites while permitting inhibition at polar sites. This ensures cell division at the proper site by restricting the formation of a division septum at the midpoint of the long axis of the cell. The protein is Cell division topological specificity factor of Alkalilimnicola ehrlichii (strain ATCC BAA-1101 / DSM 17681 / MLHE-1).